The following is a 383-amino-acid chain: Chorismate synthase (383 aa).

R48 is a binding site for NADP(+). FMN-binding positions include R125 to S127, G286, H301 to S305, and R328. The segment at P361 to N383 is disordered.

The protein belongs to the chorismate synthase family. FMNH2 serves as cofactor.

It catalyses the reaction 5-O-(1-carboxyvinyl)-3-phosphoshikimate = chorismate + phosphate. Its pathway is metabolic intermediate biosynthesis; chorismate biosynthesis; chorismate from D-erythrose 4-phosphate and phosphoenolpyruvate: step 7/7. Its function is as follows. Catalyzes the anti-1,4-elimination of the C-3 phosphate and the C-6 proR hydrogen from 5-enolpyruvylshikimate-3-phosphate (EPSP) to yield chorismate, which is the branch point compound that serves as the starting substrate for the three terminal pathways of aromatic amino acid biosynthesis. This reaction introduces a second double bond into the aromatic ring system. The protein is Chorismate synthase of Haloquadratum walsbyi (strain DSM 16790 / HBSQ001).